Consider the following 374-residue polypeptide: Anhydro-N-acetylmuramic acid kinase (374 aa).

12–19 is a binding site for ATP; it reads GTSLDGVD.

This sequence belongs to the anhydro-N-acetylmuramic acid kinase family.

The enzyme catalyses 1,6-anhydro-N-acetyl-beta-muramate + ATP + H2O = N-acetyl-D-muramate 6-phosphate + ADP + H(+). It functions in the pathway amino-sugar metabolism; 1,6-anhydro-N-acetylmuramate degradation. The protein operates within cell wall biogenesis; peptidoglycan recycling. In terms of biological role, catalyzes the specific phosphorylation of 1,6-anhydro-N-acetylmuramic acid (anhMurNAc) with the simultaneous cleavage of the 1,6-anhydro ring, generating MurNAc-6-P. Is required for the utilization of anhMurNAc either imported from the medium or derived from its own cell wall murein, and thus plays a role in cell wall recycling. This chain is Anhydro-N-acetylmuramic acid kinase, found in Enterobacter sp. (strain 638).